Consider the following 626-residue polypeptide: tRNA uridine 5-carboxymethylaminomethyl modification enzyme MnmG (626 aa).

13–18 is an FAD binding site; the sequence is GGGHAG. 273–287 contacts NAD(+); sequence GPRYCPSIEDKIHRF.

This sequence belongs to the MnmG family. In terms of assembly, homodimer. Heterotetramer of two MnmE and two MnmG subunits. The cofactor is FAD.

The protein localises to the cytoplasm. Its function is as follows. NAD-binding protein involved in the addition of a carboxymethylaminomethyl (cmnm) group at the wobble position (U34) of certain tRNAs, forming tRNA-cmnm(5)s(2)U34. The polypeptide is tRNA uridine 5-carboxymethylaminomethyl modification enzyme MnmG (Acinetobacter baumannii (strain AYE)).